We begin with the raw amino-acid sequence, 120 residues long: Fluoride-specific ion channel FluC (120 aa).

Transmembrane regions (helical) follow at residues 30–50, 66–86, and 96–116; these read FGTL…YGLL, VGFL…LLLL, and LNII…LQLV. Glycine 70 and threonine 73 together coordinate Na(+).

Belongs to the fluoride channel Fluc/FEX (TC 1.A.43) family.

The protein localises to the cell inner membrane. The catalysed reaction is fluoride(in) = fluoride(out). Its activity is regulated as follows. Na(+) is not transported, but it plays an essential structural role and its presence is essential for fluoride channel function. In terms of biological role, fluoride-specific ion channel. Important for reducing fluoride concentration in the cell, thus reducing its toxicity. In Pseudoalteromonas translucida (strain TAC 125), this protein is Fluoride-specific ion channel FluC.